A 317-amino-acid chain; its full sequence is Malate dehydrogenase (317 aa).

Residues 13-18 (GAGNIG) and Asp-38 each bind NAD(+). Substrate contacts are provided by Arg-87 and Arg-93. Residues Asn-100 and 123-125 (VTN) contribute to the NAD(+) site. The substrate site is built by Asn-125 and Arg-156. The active-site Proton acceptor is His-180.

Belongs to the LDH/MDH superfamily. MDH type 3 family.

It carries out the reaction (S)-malate + NAD(+) = oxaloacetate + NADH + H(+). In terms of biological role, catalyzes the reversible oxidation of malate to oxaloacetate. The protein is Malate dehydrogenase of Anaplasma marginale (strain Florida).